The primary structure comprises 363 residues: Pyrimidine monooxygenase RutA (363 aa).

FMN is bound by residues I49–K50, N115, E124, R140–Y141, and S190.

The protein belongs to the NtaA/SnaA/DszA monooxygenase family. RutA subfamily.

The enzyme catalyses uracil + FMNH2 + NADH + O2 = (Z)-3-ureidoacrylate + FMN + NAD(+) + H2O + H(+). It catalyses the reaction thymine + FMNH2 + NADH + O2 = (Z)-2-methylureidoacrylate + FMN + NAD(+) + H2O + H(+). Functionally, catalyzes the pyrimidine ring opening between N-3 and C-4 by an unusual flavin hydroperoxide-catalyzed mechanism, adding oxygen atoms in the process to yield ureidoacrylate peracid, that immediately reacts with FMN forming ureidoacrylate and FMN-N(5)-oxide. The FMN-N(5)-oxide reacts spontaneously with NADH to produce FMN. Requires the flavin reductase RutF to regenerate FMN in vivo. In Enterobacter cloacae subsp. cloacae (strain ATCC 13047 / DSM 30054 / NBRC 13535 / NCTC 10005 / WDCM 00083 / NCDC 279-56), this protein is Pyrimidine monooxygenase RutA.